The following is a 367-amino-acid chain: Histidinol-phosphate aminotransferase (367 aa).

An N6-(pyridoxal phosphate)lysine modification is found at Lys222.

Belongs to the class-II pyridoxal-phosphate-dependent aminotransferase family. Histidinol-phosphate aminotransferase subfamily. It depends on pyridoxal 5'-phosphate as a cofactor.

It carries out the reaction L-histidinol phosphate + 2-oxoglutarate = 3-(imidazol-4-yl)-2-oxopropyl phosphate + L-glutamate. Its pathway is amino-acid biosynthesis; L-histidine biosynthesis; L-histidine from 5-phospho-alpha-D-ribose 1-diphosphate: step 7/9. The sequence is that of Histidinol-phosphate aminotransferase from Methanosphaera stadtmanae (strain ATCC 43021 / DSM 3091 / JCM 11832 / MCB-3).